The following is a 194-amino-acid chain: Ras-related protein RabU (194 aa).

Residue glycine 19–lysine 27 coordinates GTP. The Effector region signature appears at proline 42–phenylalanine 50. GTP is bound by residues proline 68–tyrosine 72 and asparagine 130–glutamate 133.

The protein belongs to the small GTPase superfamily. Rab family.

The sequence is that of Ras-related protein RabU (rabU) from Dictyostelium discoideum (Social amoeba).